The sequence spans 84 residues: UPF0473 protein CKL_1327 (84 aa).

It belongs to the UPF0473 family.

The chain is UPF0473 protein CKL_1327 from Clostridium kluyveri (strain ATCC 8527 / DSM 555 / NBRC 12016 / NCIMB 10680 / K1).